We begin with the raw amino-acid sequence, 324 residues long: Cyclin-dependent kinase C-3 (324 aa).

One can recognise a Protein kinase domain in the interval 27 to 320 (FRRIRKIGEG…AHDALCAAYF (294 aa)). Residues 33-41 (IGEGTYGEV) and Lys-56 each bind ATP. Position 37 is a phosphothreonine (Thr-37). At Tyr-38 the chain carries Phosphotyrosine. Asp-160 acts as the Proton acceptor in catalysis. Thr-193 carries the post-translational modification Phosphothreonine.

This sequence belongs to the protein kinase superfamily. CMGC Ser/Thr protein kinase family. CDC2/CDKX subfamily.

The enzyme catalyses L-seryl-[protein] + ATP = O-phospho-L-seryl-[protein] + ADP + H(+). The catalysed reaction is L-threonyl-[protein] + ATP = O-phospho-L-threonyl-[protein] + ADP + H(+). It catalyses the reaction [DNA-directed RNA polymerase] + ATP = phospho-[DNA-directed RNA polymerase] + ADP + H(+). The sequence is that of Cyclin-dependent kinase C-3 (CDKC-1) from Oryza sativa subsp. japonica (Rice).